The sequence spans 357 residues: S-adenosylmethionine decarboxylase proenzyme (357 aa).

Catalysis depends on residues Glu11 and Glu14. Residue Ser71 is the Schiff-base intermediate with substrate; via pyruvic acid of the active site. The residue at position 71 (Ser71) is a Pyruvic acid (Ser); by autocatalysis. Catalysis depends on Cys85, which acts as the Proton donor; for catalytic activity. Active-site proton acceptor; for processing activity residues include Ser234 and His247.

It belongs to the eukaryotic AdoMetDC family. The cofactor is pyruvate. In terms of processing, is synthesized initially as an inactive proenzyme. Formation of the active enzyme involves a self-maturation process in which the active site pyruvoyl group is generated from an internal serine residue via an autocatalytic post-translational modification. Two non-identical subunits are generated from the proenzyme in this reaction, and the pyruvate is formed at the N-terminus of the alpha chain, which is derived from the carboxyl end of the proenzyme. The post-translation cleavage follows an unusual pathway, termed non-hydrolytic serinolysis, in which the side chain hydroxyl group of the serine supplies its oxygen atom to form the C-terminus of the beta chain, while the remainder of the serine residue undergoes an oxidative deamination to produce ammonia and the pyruvoyl group blocking the N-terminus of the alpha chain.

It catalyses the reaction S-adenosyl-L-methionine + H(+) = S-adenosyl 3-(methylsulfanyl)propylamine + CO2. It participates in amine and polyamine biosynthesis; S-adenosylmethioninamine biosynthesis; S-adenosylmethioninamine from S-adenosyl-L-methionine: step 1/1. The polypeptide is S-adenosylmethionine decarboxylase proenzyme (SAMDC) (Catharanthus roseus (Madagascar periwinkle)).